The following is a 255-amino-acid chain: Ribonuclease HII (255 aa).

In terms of domain architecture, RNase H type-2 spans 73–255 (LYIGGIDEAG…HRKSFLKNIL (183 aa)). Residues D79, E80, and D171 each contribute to the a divalent metal cation site.

The protein belongs to the RNase HII family. Mn(2+) serves as cofactor. It depends on Mg(2+) as a cofactor.

It localises to the cytoplasm. It catalyses the reaction Endonucleolytic cleavage to 5'-phosphomonoester.. Functionally, endonuclease that specifically degrades the RNA of RNA-DNA hybrids. The sequence is that of Ribonuclease HII from Clostridioides difficile (strain 630) (Peptoclostridium difficile).